We begin with the raw amino-acid sequence, 538 residues long: MSTETHDEPSGVAHTPASGLRGRPWPTLLAVAVGVMMVALDSTIVAIANPAIQQDLHASLADVQWITNGYLLALAVSLITAGKLGDRFGHRQTFLVGVAGFAVTSAAIGLSGSVAAIVVFRVLQGLFGALMQPSALGLLRVTFPPGKLNMAIGIWSGVVGASTAAGPIIGGLLVQHVGWEAVFFINVPVGLAALVAGLVILTDARAERAPKSFDVSGIVLLSGAMFCLVWGLIKAPAWGWGDLRTLGFLAAAVLAFAGFTLRESRATEPLMPLAMFRSVPLSAGTVLMVLMAFSFIGGLFFVTFYLQNVHGMSPVESGVHLLPLTGMMIVGAPVSGIVISRFGPGGPLVVGMLLTAASLWGMSTLEADSGMGITSLWFVLLGLGLAPVMVGTTDVIVSNAPAELAGVAGGLQQSAMQVGGSLGTAVLGVLMASRVGDVFPDKWAEANLPRVGPREAAAIEDAAEVGAVPPAGTLPGRHAGTLSEVVHSSFISGMGLAFTVAGAVALVAAAVALFTRKAEPDERAPEEFPVPASTAGRG.

A run of 14 helical transmembrane segments spans residues 28–48 (LLAVAVGVMMVALDSTIVAIA), 65–85 (WITNGYLLALAVSLITAGKLG), 100–120 (GFAVTSAAIGLSGSVAAIVVF), 126–146 (LFGALMQPSALGLLRVTFPPG), 154–174 (IWSGVVGASTAAGPIIGGLLV), 181–201 (AVFFINVPVGLAALVAGLVIL), 213–233 (FDVSGIVLLSGAMFCLVWGLI), 239–259 (GWGDLRTLGFLAAAVLAFAGF), 286–306 (VLMVLMAFSFIGGLFFVTFYL), 319–339 (VHLLPLTGMMIVGAPVSGIVI), 342–362 (FGPGGPLVVGMLLTAASLWGM), 371–391 (MGITSLWFVLLGLGLAPVMVG), 413–433 (QSAMQVGGSLGTAVLGVLMAS), and 494–514 (MGLAFTVAGAVALVAAAVALF).

This sequence belongs to the major facilitator superfamily. EmrB family.

Its subcellular location is the cell membrane. It participates in antibiotic biosynthesis; tetracenomycin C biosynthesis. Functionally, resistance to tetracenomycin C by an active tetracenomycin C efflux system which is probably energized by transmembrane electrochemical gradients. In Streptomyces glaucescens, this protein is Tetracenomycin C resistance and export protein (tcmA).